A 148-amino-acid polypeptide reads, in one-letter code: Large ribosomal subunit protein bL9 (148 aa).

It belongs to the bacterial ribosomal protein bL9 family.

Binds to the 23S rRNA. This Lysinibacillus sphaericus (strain C3-41) protein is Large ribosomal subunit protein bL9.